Consider the following 98-residue polypeptide: NADH-ubiquinone oxidoreductase chain 4L (98 aa).

The next 3 helical transmembrane spans lie at 1 to 21 (MLAI…GVLV), 25 to 45 (HLMS…ILMT), and 57 to 79 (SMAP…ALLV).

It belongs to the complex I subunit 4L family. As to quaternary structure, core subunit of respiratory chain NADH dehydrogenase (Complex I) which is composed of 45 different subunits.

Its subcellular location is the mitochondrion inner membrane. It catalyses the reaction a ubiquinone + NADH + 5 H(+)(in) = a ubiquinol + NAD(+) + 4 H(+)(out). Core subunit of the mitochondrial membrane respiratory chain NADH dehydrogenase (Complex I) which catalyzes electron transfer from NADH through the respiratory chain, using ubiquinone as an electron acceptor. Part of the enzyme membrane arm which is embedded in the lipid bilayer and involved in proton translocation. This chain is NADH-ubiquinone oxidoreductase chain 4L (MT-ND4L), found in Dasyurus hallucatus (Northern quoll).